Reading from the N-terminus, the 274-residue chain is Penicillin-insensitive murein endopeptidase (274 aa).

Positions 1–19 (MNKTAIALLALLASSASLA) are cleaved as a signal peptide. Disulfide bonds link C44–C265, C187–C235, and C216–C223. Residues H110, H113, D120, D147, H150, and H211 each contribute to the Zn(2+) site. Positions 227 to 274 (PLPPPGDGCGAELQSWFEPPKPGTTKPEKKTPPPLPPSCQALLDEHVI) are disordered.

This sequence belongs to the peptidase M74 family. As to quaternary structure, dimer. Requires Zn(2+) as cofactor.

It localises to the periplasm. Its function is as follows. Murein endopeptidase that cleaves the D-alanyl-meso-2,6-diamino-pimelyl amide bond that connects peptidoglycan strands. Likely plays a role in the removal of murein from the sacculus. In Escherichia coli O17:K52:H18 (strain UMN026 / ExPEC), this protein is Penicillin-insensitive murein endopeptidase.